The primary structure comprises 346 residues: Selenide, water dikinase (346 aa).

The active site involves U16. A non-standard amino acid (selenocysteine) is located at residue U16. Residues K19 and 47 to 49 (TAD) each bind ATP. D50 is a Mg(2+) binding site. ATP contacts are provided by residues D67, D90, and 138–140 (GHS). Mg(2+) is bound at residue D90. D226 contributes to the Mg(2+) binding site.

Belongs to the selenophosphate synthase 1 family. Class I subfamily. Homodimer. Mg(2+) is required as a cofactor.

It carries out the reaction hydrogenselenide + ATP + H2O = selenophosphate + AMP + phosphate + 2 H(+). In terms of biological role, synthesizes selenophosphate from selenide and ATP. The protein is Selenide, water dikinase of Haemophilus ducreyi (strain 35000HP / ATCC 700724).